The following is a 270-amino-acid chain: tRNA pseudouridine synthase A (270 aa).

The active-site Nucleophile is the Asp-60. The RNA binding stretch occupies residues 107–111 (FHARF). Tyr-118 is a substrate binding site. The interaction with tRNA stretch occupies residues 168 to 172 (QCQSR).

This sequence belongs to the tRNA pseudouridine synthase TruA family. Homodimer.

The catalysed reaction is uridine(38/39/40) in tRNA = pseudouridine(38/39/40) in tRNA. Its function is as follows. Formation of pseudouridine at positions 38, 39 and 40 in the anticodon stem and loop of transfer RNAs. The chain is tRNA pseudouridine synthase A from Klebsiella pneumoniae subsp. pneumoniae (strain ATCC 700721 / MGH 78578).